The sequence spans 556 residues: Oxygen-dependent choline dehydrogenase (556 aa).

4–33 (DYIIIGAGSAGNVLATRLTEDPNTTVLLLE) lines the FAD pocket. The active-site Proton acceptor is the His-473.

This sequence belongs to the GMC oxidoreductase family. FAD is required as a cofactor.

The protein localises to the cell membrane. It catalyses the reaction choline + A = betaine aldehyde + AH2. The catalysed reaction is betaine aldehyde + NAD(+) + H2O = glycine betaine + NADH + 2 H(+). Its pathway is amine and polyamine biosynthesis; betaine biosynthesis via choline pathway; betaine aldehyde from choline (cytochrome c reductase route): step 1/1. Involved in the biosynthesis of the osmoprotectant glycine betaine. Catalyzes the oxidation of choline to betaine aldehyde and betaine aldehyde to glycine betaine at the same rate. In Escherichia coli O6:H1 (strain CFT073 / ATCC 700928 / UPEC), this protein is Oxygen-dependent choline dehydrogenase.